Here is a 290-residue protein sequence, read N- to C-terminus: Lectin-related protein (290 aa).

Residues 1–36 (ANSNSRPHLLQTQKPFSVVLAISITFYLLLLNKVNS) form the signal peptide. Residues Asn-119, Asn-147, and Asn-152 are each glycosylated (N-linked (GlcNAc...) asparagine). Mn(2+) contacts are provided by Glu-161 and Asp-163. 3 residues coordinate Ca(2+): Asp-163, Asn-167, and Asp-170. Mn(2+) contacts are provided by Asp-170 and His-175.

Belongs to the leguminous lectin family. In terms of assembly, homotetramer.

Its function is as follows. Does not have any carbohydrate binding or agglutination activity. The polypeptide is Lectin-related protein (Cladrastis kentukea (Yellow wood)).